Here is a 494-residue protein sequence, read N- to C-terminus: Ubiquinol-cytochrome-c reductase complex core protein I, mitochondrial (494 aa).

H70 is a Zn(2+) binding site. E73 functions as the Proton acceptor in the catalytic mechanism. Residues H74 and E150 each coordinate Zn(2+).

The protein belongs to the peptidase M16 family. UQCRC1/QCR1 subfamily. Component of the ubiquinol-cytochrome c oxidoreductase (cytochrome b-c1 complex, complex III, CIII), a multisubunit enzyme composed of 10 subunits. The complex is composed of 3 respiratory subunits cytochrome b, cytochrome c1 and Rieske protein, 2 core protein subunits, and additional low-molecular weight protein subunits. The complex exists as an obligatory dimer and forms supercomplexes (SCs) in the inner mitochondrial membrane with cytochrome c oxidase (complex IV, CIV). The cofactor is Zn(2+). The N-terminus is blocked.

It localises to the mitochondrion inner membrane. In terms of biological role, component of the ubiquinol-cytochrome c oxidoreductase, a multisubunit transmembrane complex that is part of the mitochondrial electron transport chain which drives oxidative phosphorylation. The respiratory chain contains 3 multisubunit complexes succinate dehydrogenase (complex II, CII), ubiquinol-cytochrome c oxidoreductase (cytochrome b-c1 complex, complex III, CIII) and cytochrome c oxidase (complex IV, CIV), that cooperate to transfer electrons derived from NADH and succinate to molecular oxygen, creating an electrochemical gradient over the inner membrane that drives transmembrane transport and the ATP synthase. The cytochrome b-c1 complex catalyzes electron transfer from ubiquinol to cytochrome c, linking this redox reaction to translocation of protons across the mitochondrial inner membrane, with protons being carried across the membrane as hydrogens on the quinol. In the process called Q cycle, 2 protons are consumed from the matrix, 4 protons are released into the intermembrane space and 2 electrons are passed to cytochrome c. This is Ubiquinol-cytochrome-c reductase complex core protein I, mitochondrial from Euglena gracilis.